A 101-amino-acid chain; its full sequence is Large ribosomal subunit protein uL24 (101 aa).

It belongs to the universal ribosomal protein uL24 family. Part of the 50S ribosomal subunit.

Functionally, one of two assembly initiator proteins, it binds directly to the 5'-end of the 23S rRNA, where it nucleates assembly of the 50S subunit. In terms of biological role, one of the proteins that surrounds the polypeptide exit tunnel on the outside of the subunit. The protein is Large ribosomal subunit protein uL24 of Streptococcus sanguinis (strain SK36).